Reading from the N-terminus, the 95-residue chain is Large ribosomal subunit protein uL23 (95 aa).

Belongs to the universal ribosomal protein uL23 family. As to quaternary structure, part of the 50S ribosomal subunit. Contacts protein L29, and trigger factor when it is bound to the ribosome.

Functionally, one of the early assembly proteins it binds 23S rRNA. One of the proteins that surrounds the polypeptide exit tunnel on the outside of the ribosome. Forms the main docking site for trigger factor binding to the ribosome. The sequence is that of Large ribosomal subunit protein uL23 from Lawsonia intracellularis (strain PHE/MN1-00).